Here is a 747-residue protein sequence, read N- to C-terminus: Beta-glucosidase BoGH3A (747 aa).

A signal peptide spans 1–26; the sequence is MIIGIMKTFLLTICFLSVQTGMVAIA. Asp273 is an active-site residue.

Belongs to the glycosyl hydrolase 3 family.

It localises to the periplasm. It carries out the reaction Hydrolysis of terminal, non-reducing beta-D-glucosyl residues with release of beta-D-glucose.. The protein operates within glucan metabolism; xyloglucan degradation. Catalyzes the hydrolysis of terminal, non-reducing beta-D-glucosyl residues with release of beta-D-glucose in xyloglucan degradation, leading to remove the backbone 'G' units. This is Beta-glucosidase BoGH3A from Bacteroides ovatus (strain ATCC 8483 / DSM 1896 / JCM 5824 / BCRC 10623 / CCUG 4943 / NCTC 11153).